The primary structure comprises 286 residues: 4-hydroxybenzoate octaprenyltransferase (286 aa).

Helical transmembrane passes span 20-40 (IGILLLLWPTLWGLWLAADGM), 43-63 (PMILVIFVLGTILMRSAGCAI), 83-103 (LATGIISSREALLVAAGLSLC), 135-155 (FFAMPQAYLGIAFSFGIPMAF), 160-180 (GTVPPLAWLLVLANLFWVIAY), 209-229 (VAGILLCHITFLSILTYAGIL), and 234-254 (IWFYGALLVALGLVIVQYTMI).

The protein belongs to the UbiA prenyltransferase family. Mg(2+) is required as a cofactor.

It is found in the cell inner membrane. The enzyme catalyses all-trans-octaprenyl diphosphate + 4-hydroxybenzoate = 4-hydroxy-3-(all-trans-octaprenyl)benzoate + diphosphate. Its pathway is cofactor biosynthesis; ubiquinone biosynthesis. Its function is as follows. Catalyzes the prenylation of para-hydroxybenzoate (PHB) with an all-trans polyprenyl group. Mediates the second step in the final reaction sequence of ubiquinone-8 (UQ-8) biosynthesis, which is the condensation of the polyisoprenoid side chain with PHB, generating the first membrane-bound Q intermediate 3-octaprenyl-4-hydroxybenzoate. The polypeptide is 4-hydroxybenzoate octaprenyltransferase (Nitrosomonas eutropha (strain DSM 101675 / C91 / Nm57)).